The chain runs to 211 residues: Dual specificity protein phosphatase 26 (211 aa).

The region spanning 60–207 (NHADEVWPGL…LLALDRRLRQ (148 aa)) is the Tyrosine-protein phosphatase domain. Residue Cys152 is the Phosphocysteine intermediate of the active site.

This sequence belongs to the protein-tyrosine phosphatase family. Non-receptor class dual specificity subfamily. In terms of assembly, interacts with HSF4. As to expression, brain. In the brain it is expressed ubiquitously except in the hippocampus. Expressed in embryonal cancers (retinoblastoma, neuroepithilioma and neuroblastoma) and in anaplatic thyroid cancer.

The protein resides in the cytoplasm. Its subcellular location is the nucleus. The protein localises to the golgi apparatus. The catalysed reaction is O-phospho-L-tyrosyl-[protein] + H2O = L-tyrosyl-[protein] + phosphate. The enzyme catalyses O-phospho-L-seryl-[protein] + H2O = L-seryl-[protein] + phosphate. It catalyses the reaction O-phospho-L-threonyl-[protein] + H2O = L-threonyl-[protein] + phosphate. In terms of biological role, inactivates MAPK1 and MAPK3 which leads to dephosphorylation of heat shock factor protein 4 and a reduction in its DNA-binding activity. Inhibits MAP kinase p38 by dephosphorylating it and inhibits p38-mediated apoptosis in anaplastic thyroid cancer cells. Can also induce activation of MAP kinase p38 and c-Jun N-terminal kinase (JNK). This is Dual specificity protein phosphatase 26 (DUSP26) from Homo sapiens (Human).